A 121-amino-acid chain; its full sequence is Phosphoribosyl-AMP cyclohydrolase (121 aa).

Asp76 serves as a coordination point for Mg(2+). Cys77 is a Zn(2+) binding site. Mg(2+) contacts are provided by Asp78 and Asp80. Zn(2+) is bound by residues Cys93 and Cys100.

This sequence belongs to the PRA-CH family. Homodimer. Mg(2+) serves as cofactor. It depends on Zn(2+) as a cofactor.

It localises to the cytoplasm. The catalysed reaction is 1-(5-phospho-beta-D-ribosyl)-5'-AMP + H2O = 1-(5-phospho-beta-D-ribosyl)-5-[(5-phospho-beta-D-ribosylamino)methylideneamino]imidazole-4-carboxamide. Its pathway is amino-acid biosynthesis; L-histidine biosynthesis; L-histidine from 5-phospho-alpha-D-ribose 1-diphosphate: step 3/9. Catalyzes the hydrolysis of the adenine ring of phosphoribosyl-AMP. In Methanococcoides burtonii (strain DSM 6242 / NBRC 107633 / OCM 468 / ACE-M), this protein is Phosphoribosyl-AMP cyclohydrolase.